Reading from the N-terminus, the 101-residue chain is Small ribosomal subunit protein uS14 (101 aa).

It belongs to the universal ribosomal protein uS14 family. As to quaternary structure, part of the 30S ribosomal subunit. Contacts proteins S3 and S10.

Its function is as follows. Binds 16S rRNA, required for the assembly of 30S particles and may also be responsible for determining the conformation of the 16S rRNA at the A site. The polypeptide is Small ribosomal subunit protein uS14 (Shewanella baltica (strain OS155 / ATCC BAA-1091)).